Here is a 47-residue protein sequence, read N- to C-terminus: Protein DVU_0533 (47 aa).

A helical membrane pass occupies residues 18 to 37 (WTYILMGVTLLVYVGYWLFL).

Its subcellular location is the cell membrane. HMWC (high-molecular-weight cytochrome c), ORF2, ORF3, ORF4, ORF5 and ORF6 in the HMC operon form a transmembrane protein complex that allows electron flow from the periplasmic hydrogenase to the cytoplasmic enzymes that catalyze reduction of sulfates. The chain is Protein DVU_0533 from Nitratidesulfovibrio vulgaris (strain ATCC 29579 / DSM 644 / CCUG 34227 / NCIMB 8303 / VKM B-1760 / Hildenborough) (Desulfovibrio vulgaris).